The sequence spans 112 residues: T cell receptor alpha variable 30 (112 aa).

An N-terminal signal peptide occupies residues 1 to 21; the sequence is METLLKVLSGTLLWQLTWVRS. Positions 24–112 constitute an Ig-like domain; that stretch reads PVQSPQAVIL…YSGTYFCGTE (89 aa). Asparagine 42 carries N-linked (GlcNAc...) asparagine glycosylation. Cysteine 43 and cysteine 109 form a disulfide bridge.

Alpha-beta TR is a heterodimer composed of an alpha and beta chain; disulfide-linked. The alpha-beta TR is associated with the transmembrane signaling CD3 coreceptor proteins to form the TR-CD3 (TcR or TCR). The assembly of alpha-beta TR heterodimers with CD3 occurs in the endoplasmic reticulum where a single alpha-beta TR heterodimer associates with one CD3D-CD3E heterodimer, one CD3G-CD3E heterodimer and one CD247 homodimer forming a stable octameric structure. CD3D-CD3E and CD3G-CD3E heterodimers preferentially associate with TR alpha and TR beta chains, respectively. The association of the CD247 homodimer is the last step of TcR assembly in the endoplasmic reticulum and is required for transport to the cell surface.

The protein localises to the cell membrane. Its function is as follows. V region of the variable domain of T cell receptor (TR) alpha chain that participates in the antigen recognition. Alpha-beta T cell receptors are antigen specific receptors which are essential to the immune response and are present on the cell surface of T lymphocytes. Recognize peptide-major histocompatibility (MH) (pMH) complexes that are displayed by antigen presenting cells (APC), a prerequisite for efficient T cell adaptive immunity against pathogens. Binding of alpha-beta TR to pMH complex initiates TR-CD3 clustering on the cell surface and intracellular activation of LCK that phosphorylates the ITAM motifs of CD3G, CD3D, CD3E and CD247 enabling the recruitment of ZAP70. In turn ZAP70 phosphorylates LAT, which recruits numerous signaling molecules to form the LAT signalosome. The LAT signalosome propagates signal branching to three major signaling pathways, the calcium, the mitogen-activated protein kinase (MAPK) kinase and the nuclear factor NF-kappa-B (NF-kB) pathways, leading to the mobilization of transcription factors that are critical for gene expression and essential for T cell growth and differentiation. The T cell repertoire is generated in the thymus, by V-(D)-J rearrangement. This repertoire is then shaped by intrathymic selection events to generate a peripheral T cell pool of self-MH restricted, non-autoaggressive T cells. Post-thymic interaction of alpha-beta TR with the pMH complexes shapes TR structural and functional avidity. The polypeptide is T cell receptor alpha variable 30 (Homo sapiens (Human)).